The following is a 169-amino-acid chain: MVDAATKKTLSNIPLLKTKAGPRDRDLWVQRLKEEYQALIQYVENNKKEDNDWFRLESNKEGTRWFGKCWHYQDLMKYEFEIEFDIPITFPTTAPEIAIPELEGKTAKMYRGGKICLTDHFKPLWGRNVPKFGIAHAMALGLGPWLAVEIPDLISKGLVQHKDDQQQQK.

Cys-116 serves as the catalytic Glycyl thioester intermediate.

It belongs to the ubiquitin-conjugating enzyme family. UFC1 subfamily.

In terms of biological role, E2-like enzyme which forms an intermediate with UFM1 via a thioester linkage. This is Ubiquitin-fold modifier-conjugating enzyme 1 from Branchiostoma floridae (Florida lancelet).